The chain runs to 1070 residues: MLREGNELMSTIPGFNQIQFEGFCQFIDQGLPEELYKFPKIEDTDQEIEFQLFVETYQLVEPVIKEKDAVYKSLTYSSELYVSAGLIWKTGREIQEQTILIGNIPLMNSLGTFLVNGIYRIVINQILQSPGIYYRSELDHNGISVYTGTIISDWGGRSELEIDRKARIWARVSRKQKISILVLSSAMGSNLKEILDNVCYPEIFLSFLNDKDKKNFGSKENAILEFYQQFACVGGDPVFSESLCKELQKKFFQQKCELGRIGRRNMNRRLNLDIPQNNTFLLPRDILAATDHLIGMKFGMGTLDDMNHLKNKRIRSVADLLQDQFGLALVRLENVVRGTICGAIRHKLIPTPQNLVTSTPLTTTYESFFGLHPLSQVLDRTNPLTQIVHGRKLSYLGPGGLTGRTASFRIRDIHPSHYGRICPIDTSEGINVGLIGSLAIHARIGLLGSLESPFYKISERSAMVQMLFLSPSIDEYYMVSTGNSLALNQGIQEEQVVPARYRQEFLTIAWEQVHLRSIFPFQYFSIGASLIPFIEHNDANRALMSSNMQRQAVPLSQSEKCIVGTGLERQAALDSGILAIAEHEGKILYTDTDKIIFSGNGDIQSIPLVMYQRSNKNTCMHQNPRIPRGKCIKKGQILADGAATVGGELALGKNILVAYMPWEGYNFEDAVLISERLVYEDIYTSFHIRKYDIQTYVTSQGPERVTSEIPHLEAHLLRNLDKNGIVRLGSWVETGDILVGKLTPQMAKESSYAPEDRLLRAILGIQVSTSKETCLKLPIGGRGRVIDVRWIQKKGGSSYNPETIHVYILQKREIKVGDKVAGRHGNKGIISKILPRQDMPYLQDGRPVDMVFNPLGVPSRMNVGQIFECSLGLAGGLLDRHYRIAPFDERYEQEASRKLVFSELYQASKQTSEPWIFEPEYPGKSRIFDGRTGDLFEQPVIIGNPYILKLIHQVDDKIHGRSSGHYALVTQQPLRGRAKQGGQRVGEMEVWALEGFGVAHILQEMLTYKSDHIKARQDVLGTTIIGGTIPNPEDAPESFRLLIRELRSLALELNHFLVSEKTFQINRMEA.

The protein belongs to the RNA polymerase beta chain family. As to quaternary structure, in plastids the minimal PEP RNA polymerase catalytic core is composed of four subunits: alpha, beta, beta', and beta''. When a (nuclear-encoded) sigma factor is associated with the core the holoenzyme is formed, which can initiate transcription.

The protein localises to the plastid. The protein resides in the chloroplast. It carries out the reaction RNA(n) + a ribonucleoside 5'-triphosphate = RNA(n+1) + diphosphate. DNA-dependent RNA polymerase catalyzes the transcription of DNA into RNA using the four ribonucleoside triphosphates as substrates. The sequence is that of DNA-directed RNA polymerase subunit beta from Silene latifolia (White campion).